The following is a 440-amino-acid chain: Ribosomal protein uS12 methylthiotransferase RimO (440 aa).

One can recognise an MTTase N-terminal domain in the interval 6 to 116 (PKVGFVSLGC…VVSAVHEVVP (111 aa)). The [4Fe-4S] cluster site is built by C15, C51, C80, C149, C153, and C156. The 240-residue stretch at 135-374 (LTPRHYAYLK…AHQQAISSAR (240 aa)) folds into the Radical SAM core domain. Residues 376–440 (QAKIGLEMDV…DEYDMWGELV (65 aa)) enclose the TRAM domain.

The protein belongs to the methylthiotransferase family. RimO subfamily. Requires [4Fe-4S] cluster as cofactor.

Its subcellular location is the cytoplasm. The enzyme catalyses L-aspartate(89)-[ribosomal protein uS12]-hydrogen + (sulfur carrier)-SH + AH2 + 2 S-adenosyl-L-methionine = 3-methylsulfanyl-L-aspartate(89)-[ribosomal protein uS12]-hydrogen + (sulfur carrier)-H + 5'-deoxyadenosine + L-methionine + A + S-adenosyl-L-homocysteine + 2 H(+). Catalyzes the methylthiolation of an aspartic acid residue of ribosomal protein uS12. The chain is Ribosomal protein uS12 methylthiotransferase RimO from Ectopseudomonas mendocina (strain ymp) (Pseudomonas mendocina).